The sequence spans 135 residues: Large ribosomal subunit protein uL16c (135 aa).

It belongs to the universal ribosomal protein uL16 family. As to quaternary structure, part of the 50S ribosomal subunit.

It is found in the plastid. The protein localises to the chloroplast. This chain is Large ribosomal subunit protein uL16c, found in Nymphaea alba (White water-lily).